We begin with the raw amino-acid sequence, 66 residues long: Large ribosomal subunit protein eL29 (66 aa).

The segment covering 1 to 14 (MAKSKNSTNKNQIS) has biased composition (polar residues). A disordered region spans residues 1-66 (MAKSKNSTNK…KNLEKKVNKE (66 aa)). The segment covering 15-31 (KSHRNGIKKPKDHRHIS) has biased composition (basic residues). Residues 47 to 66 (IKNDPSIKKSKNLEKKVNKE) show a composition bias toward basic and acidic residues.

Belongs to the eukaryotic ribosomal protein eL29 family.

The protein localises to the cytoplasm. The sequence is that of Large ribosomal subunit protein eL29 (RPL29) from Tetrahymena thermophila.